The chain runs to 337 residues: Ketol-acid reductoisomerase (NADP(+)) (337 aa).

Residues 3–183 (VEVFYDDDAD…GGTRAGAIRT (181 aa)) enclose the KARI N-terminal Rossmann domain. Residues 26–29 (YGSQ), S52, S54, and 84–87 (DTAQ) each bind NADP(+). Residue H109 is part of the active site. G135 provides a ligand contact to NADP(+). A KARI C-terminal knotted domain is found at 184-329 (TFTEETETDL…SKLRGMMSWV (146 aa)). Positions 192, 196, 228, and 232 each coordinate Mg(2+). Substrate is bound at residue S253.

This sequence belongs to the ketol-acid reductoisomerase family. Mg(2+) serves as cofactor.

It catalyses the reaction (2R)-2,3-dihydroxy-3-methylbutanoate + NADP(+) = (2S)-2-acetolactate + NADPH + H(+). The enzyme catalyses (2R,3R)-2,3-dihydroxy-3-methylpentanoate + NADP(+) = (S)-2-ethyl-2-hydroxy-3-oxobutanoate + NADPH + H(+). Its pathway is amino-acid biosynthesis; L-isoleucine biosynthesis; L-isoleucine from 2-oxobutanoate: step 2/4. It functions in the pathway amino-acid biosynthesis; L-valine biosynthesis; L-valine from pyruvate: step 2/4. Involved in the biosynthesis of branched-chain amino acids (BCAA). Catalyzes an alkyl-migration followed by a ketol-acid reduction of (S)-2-acetolactate (S2AL) to yield (R)-2,3-dihydroxy-isovalerate. In the isomerase reaction, S2AL is rearranged via a Mg-dependent methyl migration to produce 3-hydroxy-3-methyl-2-ketobutyrate (HMKB). In the reductase reaction, this 2-ketoacid undergoes a metal-dependent reduction by NADPH to yield (R)-2,3-dihydroxy-isovalerate. The chain is Ketol-acid reductoisomerase (NADP(+)) from Salinispora arenicola (strain CNS-205).